The following is a 692-amino-acid chain: Translation initiation factor IF-2 (692 aa).

Positions 194–363 constitute a tr-type G domain; sequence PRPPIVTVMG…LLVAEMEDLK (170 aa). The interval 203–210 is G1; it reads GHVDHGKT. Residue 203–210 coordinates GTP; it reads GHVDHGKT. Residues 228–232 are G2; it reads GITQH. The segment at 249–252 is G3; the sequence is DTPG. Residues 249-253 and 303-306 contribute to the GTP site; these read DTPGH and NKID. Residues 303 to 306 are G4; the sequence is NKID. Positions 339 to 341 are G5; the sequence is SAK.

The protein belongs to the TRAFAC class translation factor GTPase superfamily. Classic translation factor GTPase family. IF-2 subfamily.

The protein localises to the cytoplasm. In terms of biological role, one of the essential components for the initiation of protein synthesis. Protects formylmethionyl-tRNA from spontaneous hydrolysis and promotes its binding to the 30S ribosomal subunits. Also involved in the hydrolysis of GTP during the formation of the 70S ribosomal complex. The chain is Translation initiation factor IF-2 from Thermoanaerobacter sp. (strain X514).